The sequence spans 316 residues: 4-hydroxy-3-methylbut-2-enyl diphosphate reductase (316 aa).

[4Fe-4S] cluster is bound at residue Cys-12. Residues His-41 and His-74 each contribute to the (2E)-4-hydroxy-3-methylbut-2-enyl diphosphate site. Dimethylallyl diphosphate contacts are provided by His-41 and His-74. Residues His-41 and His-74 each contribute to the isopentenyl diphosphate site. Cys-96 provides a ligand contact to [4Fe-4S] cluster. Position 124 (His-124) interacts with (2E)-4-hydroxy-3-methylbut-2-enyl diphosphate. His-124 serves as a coordination point for dimethylallyl diphosphate. Position 124 (His-124) interacts with isopentenyl diphosphate. Glu-126 functions as the Proton donor in the catalytic mechanism. Thr-169 serves as a coordination point for (2E)-4-hydroxy-3-methylbut-2-enyl diphosphate. Cys-199 contacts [4Fe-4S] cluster. 4 residues coordinate (2E)-4-hydroxy-3-methylbut-2-enyl diphosphate: Ser-227, Ser-228, Asn-229, and Ser-271. Ser-227, Ser-228, Asn-229, and Ser-271 together coordinate dimethylallyl diphosphate. Isopentenyl diphosphate contacts are provided by Ser-227, Ser-228, Asn-229, and Ser-271.

It belongs to the IspH family. It depends on [4Fe-4S] cluster as a cofactor.

It carries out the reaction isopentenyl diphosphate + 2 oxidized [2Fe-2S]-[ferredoxin] + H2O = (2E)-4-hydroxy-3-methylbut-2-enyl diphosphate + 2 reduced [2Fe-2S]-[ferredoxin] + 2 H(+). The catalysed reaction is dimethylallyl diphosphate + 2 oxidized [2Fe-2S]-[ferredoxin] + H2O = (2E)-4-hydroxy-3-methylbut-2-enyl diphosphate + 2 reduced [2Fe-2S]-[ferredoxin] + 2 H(+). It participates in isoprenoid biosynthesis; dimethylallyl diphosphate biosynthesis; dimethylallyl diphosphate from (2E)-4-hydroxy-3-methylbutenyl diphosphate: step 1/1. It functions in the pathway isoprenoid biosynthesis; isopentenyl diphosphate biosynthesis via DXP pathway; isopentenyl diphosphate from 1-deoxy-D-xylulose 5-phosphate: step 6/6. Its function is as follows. Catalyzes the conversion of 1-hydroxy-2-methyl-2-(E)-butenyl 4-diphosphate (HMBPP) into a mixture of isopentenyl diphosphate (IPP) and dimethylallyl diphosphate (DMAPP). Acts in the terminal step of the DOXP/MEP pathway for isoprenoid precursor biosynthesis. In Xanthomonas oryzae pv. oryzae (strain MAFF 311018), this protein is 4-hydroxy-3-methylbut-2-enyl diphosphate reductase.